Consider the following 928-residue polypeptide: DENN domain-containing protein 2C (928 aa).

Disordered regions lie at residues 67-105 and 245-266; these read KSKN…YDDT and QSSL…IRGR. Positions 85–105 are enriched in basic and acidic residues; that stretch reads ENTKSHDQSENENKKHEYDDT. S271 is modified (phosphoserine). The interval 428–456 is disordered; the sequence is KLHSYTGKELPPTKGETSGNESDAEYLPK. Residues 492 to 641 enclose the uDENN domain; it reads ELFVVVSLQK…PFPAPGRTIT (150 aa). Positions 663-796 constitute a cDENN domain; the sequence is RLEHVDFKCL…LQAALMQILE (134 aa). The dDENN domain maps to 798–888; it reads RNEILTQEQN…QDRELRKSGV (91 aa).

Guanine nucleotide exchange factor (GEF) which may activate RAB9A and RAB9B. Promotes the exchange of GDP to GTP, converting inactive GDP-bound Rab proteins into their active GTP-bound form. In Homo sapiens (Human), this protein is DENN domain-containing protein 2C (DENND2C).